A 316-amino-acid polypeptide reads, in one-letter code: Ribosomal RNA small subunit methyltransferase H (316 aa).

S-adenosyl-L-methionine-binding positions include 35-37 (GGH), aspartate 55, phenylalanine 79, aspartate 101, and glutamine 108.

It belongs to the methyltransferase superfamily. RsmH family.

It localises to the cytoplasm. It catalyses the reaction cytidine(1402) in 16S rRNA + S-adenosyl-L-methionine = N(4)-methylcytidine(1402) in 16S rRNA + S-adenosyl-L-homocysteine + H(+). Specifically methylates the N4 position of cytidine in position 1402 (C1402) of 16S rRNA. This is Ribosomal RNA small subunit methyltransferase H from Vibrio campbellii (strain ATCC BAA-1116).